The sequence spans 485 residues: Serine/threonine-protein kinase 4 (485 aa).

Positions 30 to 281 constitute a Protein kinase domain; it reads FDVLEKLGEG…ATELLQHPFI (252 aa). Residues 36 to 44 and lysine 59 contribute to the ATP site; that span reads LGEGSYGSV. Aspartate 149 (proton acceptor) is an active-site residue. Position 183 is a phosphothreonine; by autocatalysis (threonine 183). Residues 287–313 are a coiled coil; the sequence is ESILRHLINEAQDAKLKRTELKQREVE. Positions 431-478 constitute an SARAH domain; the sequence is YSFLKDWSVTELQLRLNSLDPMMEQEIEEIHHKYQAKRQPILEAIESK.

This sequence belongs to the protein kinase superfamily. STE Ser/Thr protein kinase family. STE20 subfamily. Homodimer; mediated via the coiled-coil region. Mg(2+) serves as cofactor. Autophosphorylated on Thr-183. In terms of processing, proteolytically cleaved by caspase-3 during apoptosis at Asp-326 resulting in a 37 kDa form. Proteolytic cleavage results in kinase activation and nuclear translocation of the truncated form (MST1/N).

The protein localises to the cytoplasm. It localises to the nucleus. The catalysed reaction is L-seryl-[protein] + ATP = O-phospho-L-seryl-[protein] + ADP + H(+). It carries out the reaction L-threonyl-[protein] + ATP = O-phospho-L-threonyl-[protein] + ADP + H(+). With respect to regulation, the C-terminal non-catalytic region inhibits the kinase activity, the enzyme is activated by caspase-cleavage. Homodimerization and autophosphorylation of Thr-183 is also required for full activation. In terms of biological role, stress-activated, pro-apoptotic kinase which, following caspase-cleavage, enters the nucleus and induces chromatin condensation followed by internucleosomal DNA fragmentation. Key component of the Hippo signaling pathway which plays a pivotal role in organ size control and tumor suppression by restricting proliferation and promoting apoptosis. The core of this pathway is composed of a kinase cascade wherein stk3/mst2 and stk4/mst1, in complex with its regulatory protein sav1, phosphorylates and activates lats1/2 in complex with its regulatory protein mob1, which in turn phosphorylates and inactivates yap1 oncoprotein and wwtr1/taz. Phosphorylation of yap1 by lats2 inhibits its translocation into the nucleus to regulate cellular genes important for cell proliferation, cell death, and cell migration. Phosphorylates 'Ser-14' of histone H2B (H2BS14ph) during apoptosis. This chain is Serine/threonine-protein kinase 4 (stk4), found in Xenopus tropicalis (Western clawed frog).